The following is a 904-amino-acid chain: Protein abrupt (904 aa).

Over residues 1 to 15 (MTESTQLQTAENNNA) the composition is skewed to polar residues. Disordered regions lie at residues 1-30 (MTES…TSSV) and 53-72 (GSAL…HQQQ). A BTB domain is found at 103–168 (VDVTLACDER…MYNGEVNVSH (66 aa)). The segment covering 204 to 238 (SHNSSNNNNNNSSSNNSLSNNNNNNNNNAESSNHN) has biased composition (low complexity). Disordered stretches follow at residues 204-287 (SHNS…LNSP), 349-390 (ASSA…PPPQ), 411-438 (LLDR…KDRE), and 451-501 (ALEN…NQRS). A compositionally biased stretch (polar residues) spans 239–253 (KISSYLSPNQTSAAC). The span at 254–286 (NNSSNSNSNNHSSSHNNSSSNNISGSLNSSLNS) shows a compositional bias: low complexity. Residues 429 to 438 (SGRDTSKDRE) show a composition bias toward basic and acidic residues. Residues 452–461 (LENSNGQQAN) are compositionally biased toward polar residues. A Phosphoserine modification is found at Ser-474. Residues 481–500 (PSDRGDGQHDGTLDGIDNQR) are compositionally biased toward basic and acidic residues. C2H2-type zinc fingers lie at residues 544–567 (RPCP…EDKH) and 573–596 (YRCV…SRQH). 2 disordered regions span residues 633-696 (ELRA…GGSS) and 832-904 (AAGN…VHNT). Over residues 642–655 (GGSGSSGGGGGGGS) the composition is skewed to gly residues. The span at 671 to 682 (DDAEDSDDDPED) shows a compositional bias: acidic residues. 3 positions are modified to phosphoserine: Ser-837, Ser-846, and Ser-868. The segment covering 851-868 (MGHDEMAENDGDMRREGS) has biased composition (basic and acidic residues). Residues 876–886 (DNNQSGSNHEV) are compositionally biased toward polar residues. 2 positions are modified to phosphoserine: Ser-889 and Ser-896.

In terms of tissue distribution, expressed in CNS midline cells during embryonic stages 9-13. Expression also seen in cells of the stomagastric nervous system. Segmentally repeated stripes of ectodermal expression appear at stage 11 that become uniform by stage 12 and throughout embryogenesis. Expressed at variable levels in somatic muscles from stage 16 and in all imaginal disks during larval development. Expression is seen in da neurons that grow in two-dimensional dendrites underneath the epidermis during late embryonic, larval, and pupal stages.

The protein resides in the nucleus. In terms of biological role, expression is vital for development; may be involved in transcriptional regulation. In embryos, muscle specific expression is required for segmental nerve b (SNb) motoneuron target recognition within ventral longitudinal muscles. Has a role in establishing and maintaining embryonic muscle attachments, adult sensory cell formation (macrochaetae) and morphogenesis of adult appendages (legs, antenna aristae and male external genitalia). Has a role in the morphogenesis of the class I dendritic neurons: selective expression of ab in class I da neurons plays a pivotal role in forming dendritic arbors, which are characteristic of the class I cells. The development of more complex arbors of class II-IV neurons depends on the absence of ab. The polypeptide is Protein abrupt (ab) (Drosophila melanogaster (Fruit fly)).